A 368-amino-acid chain; its full sequence is Probable replication factor C subunit 5 (368 aa).

69 to 76 (GPPGTGKT) serves as a coordination point for ATP.

The protein belongs to the activator 1 small subunits family. As to quaternary structure, heteropentamer of various rfc subunits that forms a complex (RFC) with PCNA in the presence of ATP.

It is found in the nucleus. In terms of biological role, the elongation of primed DNA templates by DNA polymerase delta and epsilon requires the action of the accessory proteins proliferating cell nuclear antigen (PCNA) and activator 1. The polypeptide is Probable replication factor C subunit 5 (Caenorhabditis elegans).